The primary structure comprises 264 residues: 3-methyl-2-oxobutanoate hydroxymethyltransferase (264 aa).

D45 and D84 together coordinate Mg(2+). 3-methyl-2-oxobutanoate-binding positions include 45 to 46 (DS), D84, and K112. E114 serves as a coordination point for Mg(2+). The active-site Proton acceptor is E181.

Belongs to the PanB family. Homodecamer; pentamer of dimers. The cofactor is Mg(2+).

It localises to the cytoplasm. The enzyme catalyses 3-methyl-2-oxobutanoate + (6R)-5,10-methylene-5,6,7,8-tetrahydrofolate + H2O = 2-dehydropantoate + (6S)-5,6,7,8-tetrahydrofolate. Its pathway is cofactor biosynthesis; (R)-pantothenate biosynthesis; (R)-pantoate from 3-methyl-2-oxobutanoate: step 1/2. Functionally, catalyzes the reversible reaction in which hydroxymethyl group from 5,10-methylenetetrahydrofolate is transferred onto alpha-ketoisovalerate to form ketopantoate. The chain is 3-methyl-2-oxobutanoate hydroxymethyltransferase from Escherichia coli O157:H7.